The following is a 154-amino-acid chain: Histone H2B.v3 (154 aa).

Basic residues predominate over residues 1–11 (MVFVKGQKKAT). The tract at residues 1–48 (MVFVKGQKKATKGSTQSGEEKTASTTPKVTKTPTEGGEKKRKKRKSDY) is disordered. Positions 12 to 27 (KGSTQSGEEKTASTTP) are enriched in polar residues.

The protein belongs to the histone H2B family. As to quaternary structure, the nucleosome is a histone octamer containing two molecules each of H2A, H2B, H3 and H4 assembled in one H3-H4 heterotetramer and two H2A-H2B heterodimers. The octamer wraps approximately 147 bp of DNA.

The protein resides in the nucleus. Its subcellular location is the chromosome. Core component of nucleosome which plays a central role in DNA double strand break (DSB) repair. Nucleosomes wrap and compact DNA into chromatin, limiting DNA accessibility to the cellular machineries which require DNA as a template. Histones thereby play a central role in transcription regulation, DNA repair, DNA replication and chromosomal stability. DNA accessibility is regulated via a complex set of post-translational modifications of histones, also called histone code, and nucleosome remodeling. The sequence is that of Histone H2B.v3 (H2Bv3) from Dictyostelium discoideum (Social amoeba).